The sequence spans 128 residues: Fluoride-specific ion channel FluC (128 aa).

Transmembrane regions (helical) follow at residues 7–27, 34–54, 70–90, and 104–124; these read AVLL…LIAV, TGFP…IGMI, LLLA…MYEI, and LYLI…MALA. 2 residues coordinate Na(+): Gly-78 and Thr-81.

This sequence belongs to the fluoride channel Fluc/FEX (TC 1.A.43) family.

The protein localises to the cell inner membrane. The enzyme catalyses fluoride(in) = fluoride(out). Na(+) is not transported, but it plays an essential structural role and its presence is essential for fluoride channel function. Its function is as follows. Fluoride-specific ion channel. Important for reducing fluoride concentration in the cell, thus reducing its toxicity. In Prosthecochloris aestuarii (strain DSM 271 / SK 413), this protein is Fluoride-specific ion channel FluC.